Consider the following 311-residue polypeptide: Probable porphobilinogen deaminase (311 aa).

Residue C237 is modified to S-(dipyrrolylmethanemethyl)cysteine. The segment at 270–289 is disordered; the sequence is SKTGDKNNPKSLGQSAGEEL.

It belongs to the HMBS family. The cofactor is dipyrromethane.

It catalyses the reaction 4 porphobilinogen + H2O = hydroxymethylbilane + 4 NH4(+). It participates in porphyrin-containing compound metabolism; protoporphyrin-IX biosynthesis; coproporphyrinogen-III from 5-aminolevulinate: step 2/4. Tetrapolymerization of the monopyrrole PBG into the hydroxymethylbilane pre-uroporphyrinogen in several discrete steps. The protein is Probable porphobilinogen deaminase of Nitrosopumilus maritimus (strain SCM1).